We begin with the raw amino-acid sequence, 307 residues long: Ubiquitin recognition factor in ER-associated degradation protein 1 (307 aa).

The residue at position 1 (Met-1) is an N-acetylmethionine. Phosphoserine occurs at positions 129, 231, 245, 247, and 299. 2 disordered regions span residues 230-255 (GSGN…GDIK) and 288-307 (GRFI…GRKP).

Belongs to the UFD1 family. In terms of assembly, heterodimer with NPLOC4, this heterodimer binds VCP and inhibits Golgi membrane fusion. Interacts with USP13. Interacts with ZFAND2B; probably through VCP.

Its subcellular location is the nucleus. The protein localises to the cytoplasm. The protein resides in the cytosol. It participates in protein degradation; proteasomal ubiquitin-dependent pathway. Its function is as follows. Essential component of the ubiquitin-dependent proteolytic pathway which degrades ubiquitin fusion proteins. The ternary complex containing UFD1, VCP and NPLOC4 binds ubiquitinated proteins and is necessary for the export of misfolded proteins from the ER to the cytoplasm, where they are degraded by the proteasome. The NPLOC4-UFD1-VCP complex regulates spindle disassembly at the end of mitosis and is necessary for the formation of a closed nuclear envelope. It may be involved in the development of some ectoderm-derived structures. Acts as a negative regulator of type I interferon production via the complex formed with VCP and NPLOC4, which binds to RIGI and recruits RNF125 to promote ubiquitination and degradation of RIGI. This is Ubiquitin recognition factor in ER-associated degradation protein 1 from Mus musculus (Mouse).